We begin with the raw amino-acid sequence, 359 residues long: 5-amino-6-(D-ribitylamino)uracil--L-tyrosine 4-hydroxyphenyl transferase (359 aa).

A Radical SAM core domain is found at 45 to 282 (VTYVVNANIN…TYAISRIFFK (238 aa)). [4Fe-4S] cluster-binding residues include Cys-59, Cys-63, and Cys-66.

This sequence belongs to the radical SAM superfamily. CofH family. Consists of two subunits, CofG and CofH. The cofactor is [4Fe-4S] cluster.

It catalyses the reaction 5-amino-6-(D-ribitylamino)uracil + L-tyrosine + S-adenosyl-L-methionine = 5-amino-5-(4-hydroxybenzyl)-6-(D-ribitylimino)-5,6-dihydrouracil + 2-iminoacetate + 5'-deoxyadenosine + L-methionine + H(+). The protein operates within cofactor biosynthesis; coenzyme F0 biosynthesis. Its function is as follows. Catalyzes the radical-mediated synthesis of 5-amino-5-(4-hydroxybenzyl)-6-(D-ribitylimino)-5,6-dihydrouracil from 5-amino-6-(D-ribitylamino)uracil and L-tyrosine. The chain is 5-amino-6-(D-ribitylamino)uracil--L-tyrosine 4-hydroxyphenyl transferase from Methanococcus maripaludis (strain C5 / ATCC BAA-1333).